The following is a 482-amino-acid chain: Protein nucleotidyltransferase YdiU (482 aa).

Residues G88, G90, R91, K111, D123, G124, R174, and R181 each coordinate ATP. Catalysis depends on D250, which acts as the Proton acceptor. Mg(2+)-binding residues include N251 and D260. D260 contributes to the ATP binding site.

Belongs to the SELO family. Mg(2+) serves as cofactor. Mn(2+) is required as a cofactor.

It catalyses the reaction L-seryl-[protein] + ATP = 3-O-(5'-adenylyl)-L-seryl-[protein] + diphosphate. The enzyme catalyses L-threonyl-[protein] + ATP = 3-O-(5'-adenylyl)-L-threonyl-[protein] + diphosphate. The catalysed reaction is L-tyrosyl-[protein] + ATP = O-(5'-adenylyl)-L-tyrosyl-[protein] + diphosphate. It carries out the reaction L-histidyl-[protein] + UTP = N(tele)-(5'-uridylyl)-L-histidyl-[protein] + diphosphate. It catalyses the reaction L-seryl-[protein] + UTP = O-(5'-uridylyl)-L-seryl-[protein] + diphosphate. The enzyme catalyses L-tyrosyl-[protein] + UTP = O-(5'-uridylyl)-L-tyrosyl-[protein] + diphosphate. Nucleotidyltransferase involved in the post-translational modification of proteins. It can catalyze the addition of adenosine monophosphate (AMP) or uridine monophosphate (UMP) to a protein, resulting in modifications known as AMPylation and UMPylation. This is Protein nucleotidyltransferase YdiU from Cronobacter sakazakii (strain ATCC BAA-894) (Enterobacter sakazakii).